We begin with the raw amino-acid sequence, 171 residues long: Co-chaperone protein HscB homolog (171 aa).

Positions 3 to 75 (SHFALFDLEP…SQRARYLLSL (73 aa)) constitute a J domain.

It belongs to the HscB family. Interacts with HscA and stimulates its ATPase activity.

In terms of biological role, co-chaperone involved in the maturation of iron-sulfur cluster-containing proteins. Seems to help targeting proteins to be folded toward HscA. The sequence is that of Co-chaperone protein HscB homolog from Azotobacter vinelandii.